Consider the following 407-residue polypeptide: Digeranylgeranylglycerophospholipid reductase (407 aa).

Residues Ala-15, Glu-34, Cys-45, Ala-46, Gly-48, Arg-99, Ala-123, Asp-281, Gly-293, and Ile-294 each coordinate FAD.

Belongs to the geranylgeranyl reductase family. DGGGPL reductase subfamily. It depends on FAD as a cofactor.

It catalyses the reaction a 2,3-bis-O-phytanyl-sn-glycerol 1-phospholipid + 8 oxidized 2[4Fe-4S]-[ferredoxin] = a 2,3-bis-O-(geranylgeranyl)-sn-glycerol 1-phospholipid + 8 reduced 2[4Fe-4S]-[ferredoxin] + 16 H(+). The enzyme catalyses 2,3-bis-O-(phytanyl)-sn-glycerol 1-phosphate + 8 oxidized 2[4Fe-4S]-[ferredoxin] = 2,3-bis-O-(geranylgeranyl)-sn-glycerol 1-phosphate + 8 reduced 2[4Fe-4S]-[ferredoxin] + 16 H(+). It carries out the reaction a 2,3-bis-O-phytanyl-sn-glycerol 1-phospholipid + 8 A = a 2,3-bis-O-(geranylgeranyl)-sn-glycerol 1-phospholipid + 8 AH2. The catalysed reaction is CDP-2,3-bis-O-(geranylgeranyl)-sn-glycerol + 8 AH2 = CDP-2,3-bis-O-(phytanyl)-sn-glycerol + 8 A. It catalyses the reaction archaetidylserine + 8 AH2 = 2,3-bis-O-phytanyl-sn-glycero-3-phospho-L-serine + 8 A. The protein operates within membrane lipid metabolism; glycerophospholipid metabolism. Its function is as follows. Is involved in the reduction of 2,3-digeranylgeranylglycerophospholipids (unsaturated archaeols) into 2,3-diphytanylglycerophospholipids (saturated archaeols) in the biosynthesis of archaeal membrane lipids. Catalyzes the formation of archaetidic acid (2,3-di-O-phytanyl-sn-glyceryl phosphate) from 2,3-di-O-geranylgeranylglyceryl phosphate (DGGGP) via the hydrogenation of each double bond of the isoprenoid chains. Is also probably able to reduce double bonds of geranyl groups in CDP-2,3-bis-O-(geranylgeranyl)-sn-glycerol and archaetidylserine, thus acting at various stages in the biosynthesis of archaeal membrane lipids. The protein is Digeranylgeranylglycerophospholipid reductase of Methanosarcina mazei (strain ATCC BAA-159 / DSM 3647 / Goe1 / Go1 / JCM 11833 / OCM 88) (Methanosarcina frisia).